The chain runs to 525 residues: D-3-phosphoglycerate dehydrogenase (525 aa).

NAD(+) contacts are provided by residues 148–149 (RI), Asp-168, Thr-200, 227–229 (CAR), and Asp-253. The active site involves Arg-229. Glu-258 is an active-site residue. His-276 functions as the Proton donor in the catalytic mechanism. Residue 276–279 (HLGA) coordinates NAD(+). In terms of domain architecture, ACT spans 452–524 (LVYIQHQDTT…DIVSVKLIDL (73 aa)).

It belongs to the D-isomer specific 2-hydroxyacid dehydrogenase family.

It catalyses the reaction (2R)-3-phosphoglycerate + NAD(+) = 3-phosphooxypyruvate + NADH + H(+). It carries out the reaction (R)-2-hydroxyglutarate + NAD(+) = 2-oxoglutarate + NADH + H(+). The protein operates within amino-acid biosynthesis; L-serine biosynthesis; L-serine from 3-phospho-D-glycerate: step 1/3. With respect to regulation, in bacteria displays feedback inhibition by L-serine. In terms of biological role, catalyzes the reversible oxidation of 3-phospho-D-glycerate to 3-phosphonooxypyruvate, the first step of the phosphorylated L-serine biosynthesis pathway. Also catalyzes the reversible oxidation of 2-hydroxyglutarate to 2-oxoglutarate. This chain is D-3-phosphoglycerate dehydrogenase (serA), found in Bacillus subtilis (strain 168).